Consider the following 463-residue polypeptide: FAD-dependent monooxygenase str9 (463 aa).

Residues Glu-37, Gly-50, and Arg-114 each contribute to the FAD site. Arg-200 is an active-site residue. Residue Asp-334 coordinates FAD.

The protein belongs to the paxM FAD-dependent monooxygenase family.

The protein operates within mycotoxin biosynthesis. FAD-dependent monooxygenase; part of the gene cluster that mediates the biosynthesis of strobilurin A, an antifungal polyketide that contains a key beta-methoxyacrylate toxophore that targets the complex III of the mitochondrial electron transport chain. Strobilurin biosynthesis begins with construction of benzoyl CoA by step-wise elimination of ammonia from phenylalanine by the phenylalanine ammonia-lyase str11, oxygenation by str8 and retro-Claisen reaction to form benzoic acid, which is activated to its CoA thiolester benzoyl CoA by the dedicated CoA ligase str10. Benzoyl CoA forms the starter unit for the highly reducing polyketide synthase stpks1 that produces the polyketide prestrobilutin A. The FAD-dependent oxygenase str9 then catalyzes the key oxidative rearrangement responsible for the creation of the beta-methoxyacrylate toxophore. Str9 performs epoxidation of the 2,3 olefin of prestrobilutin A, followed by Meinwald rearrangement to furnish the aldehyde intermediate. Rapid enolization of the aldehyde intermediate would give the beta-methoxyacrylate skeleton and methylations catalyzed by str2 and str3 complete the synthesis and lead to the production of strobilurin A. The short-chain dehydrogenase stl2 and the dehydrogenase str4 play a role in the shunt pathway leading to the production of bolineol. The cluster encodes no obvious halogenase gene that could be involved in production of strobilurin B, nor any obvious dimethylallyl-transferase that could be involved in the production of strobilurin G. It is possible that unknown proteins encoded in, or near, the cluster (such as str1 or stl1) may form new classes of halogenases or dimethylally-transferases, or that the responsible genes are located elsewhere on the genome. Similarly, proteins encoded by str5/str6 hydrolases appear to have no chemical role in the biosynthesis of strobilurin A. Finally, no obvious self-resistance gene is found within the cluster. This is FAD-dependent monooxygenase str9 from Strobilurus tenacellus.